A 371-amino-acid chain; its full sequence is Tetraacyldisaccharide 4'-kinase (371 aa).

48–55 is a binding site for ATP; the sequence is SAGGTGKT.

This sequence belongs to the LpxK family.

It catalyses the reaction a lipid A disaccharide + ATP = a lipid IVA + ADP + H(+). It functions in the pathway glycolipid biosynthesis; lipid IV(A) biosynthesis; lipid IV(A) from (3R)-3-hydroxytetradecanoyl-[acyl-carrier-protein] and UDP-N-acetyl-alpha-D-glucosamine: step 6/6. Transfers the gamma-phosphate of ATP to the 4'-position of a tetraacyldisaccharide 1-phosphate intermediate (termed DS-1-P) to form tetraacyldisaccharide 1,4'-bis-phosphate (lipid IVA). This Chlorobium chlorochromatii (strain CaD3) protein is Tetraacyldisaccharide 4'-kinase.